A 441-amino-acid chain; its full sequence is VGFKAGVKDYKLTYYTPDYQTKATDILAAFRVTPQPGVPPEEAGAAVAAESSTGTWTTVWTDGLTSLDRYKGRCYHIEPVAGEENQYIAYVAYPLDLFEEGSVTNMFTSIVGNVFGFKALRALRLEDLRIPPAYSKTFQGPPHGIQVERDKLNKYGRPLLGCTIKPKLGLSAKNYGRAVYECLRGGLDFTKDDENVNSQPFMRWRDRFLFCAEAIYKAQAETGEIKGHYLNATAGTCEEMTKRAVFARELGVPIVMHDYLTGGFTANTSLAHYCRDNGLLLHIHRAMHAVIDRQKNHGIHFRVLAKALRMSGGDHIHSGTVVGKLEGERDITLGFVDLLREEYIEKDRSRGIYFSQDWVSLPGVLPVASGGIHVWHMPALTEIFGDDSVLQFGGGTLGHPWGNRPGAVANRVALEACVQARNEGRDLAREGNEIIPVASKW.

The residue at position 4 (lysine 4) is an N6,N6,N6-trimethyllysine. Residues asparagine 113 and threonine 163 each contribute to the substrate site. Residue lysine 165 is the Proton acceptor of the active site. Lysine 167 contributes to the substrate binding site. Residues lysine 191, aspartate 193, and glutamate 194 each contribute to the Mg(2+) site. Position 191 is an N6-carboxylysine (lysine 191). The active-site Proton acceptor is the histidine 284. 3 residues coordinate substrate: arginine 285, histidine 317, and serine 369.

The protein belongs to the RuBisCO large chain family. Type I subfamily. In terms of assembly, heterohexadecamer of 8 large chains and 8 small chains; disulfide-linked. The disulfide link is formed within the large subunit homodimers. The cofactor is Mg(2+). The disulfide bond which can form in the large chain dimeric partners within the hexadecamer appears to be associated with oxidative stress and protein turnover.

The protein localises to the plastid. It is found in the chloroplast. The catalysed reaction is 2 (2R)-3-phosphoglycerate + 2 H(+) = D-ribulose 1,5-bisphosphate + CO2 + H2O. It catalyses the reaction D-ribulose 1,5-bisphosphate + O2 = 2-phosphoglycolate + (2R)-3-phosphoglycerate + 2 H(+). Functionally, ruBisCO catalyzes two reactions: the carboxylation of D-ribulose 1,5-bisphosphate, the primary event in carbon dioxide fixation, as well as the oxidative fragmentation of the pentose substrate in the photorespiration process. Both reactions occur simultaneously and in competition at the same active site. The chain is Ribulose bisphosphate carboxylase large chain from Heliamphora nutans (Venezuelan marsh pitcher plant).